The following is a 310-amino-acid chain: tRNA-cytidine(32) 2-sulfurtransferase (310 aa).

Positions 45-50 (SGGKDS) match the PP-loop motif motif. Residues cysteine 120, cysteine 123, and cysteine 211 each contribute to the [4Fe-4S] cluster site.

It belongs to the TtcA family. As to quaternary structure, homodimer. Requires Mg(2+) as cofactor. [4Fe-4S] cluster is required as a cofactor.

It is found in the cytoplasm. The catalysed reaction is cytidine(32) in tRNA + S-sulfanyl-L-cysteinyl-[cysteine desulfurase] + AH2 + ATP = 2-thiocytidine(32) in tRNA + L-cysteinyl-[cysteine desulfurase] + A + AMP + diphosphate + H(+). It participates in tRNA modification. Functionally, catalyzes the ATP-dependent 2-thiolation of cytidine in position 32 of tRNA, to form 2-thiocytidine (s(2)C32). The sulfur atoms are provided by the cysteine/cysteine desulfurase (IscS) system. This Shewanella sp. (strain ANA-3) protein is tRNA-cytidine(32) 2-sulfurtransferase.